A 516-amino-acid polypeptide reads, in one-letter code: Putative fatty acyl-CoA reductase CG8306 (516 aa).

Transmembrane regions (helical) follow at residues 356–376 (WVFR…LDLV), 471–491 (ILLG…FKLI), and 496–516 (GIST…FGLL).

It belongs to the fatty acyl-CoA reductase family.

The protein resides in the membrane. It catalyses the reaction a long-chain fatty acyl-CoA + 2 NADPH + 2 H(+) = a long-chain primary fatty alcohol + 2 NADP(+) + CoA. In terms of biological role, catalyzes the reduction of C16 or C18 fatty acyl-CoA to fatty alcohols. This chain is Putative fatty acyl-CoA reductase CG8306, found in Drosophila melanogaster (Fruit fly).